The following is a 121-amino-acid chain: MEAKAIARHIRVTPMKARRVVNLVRGLQANEALAILKFAPQAASEPVFKVVQSAISNARVLADRDGVAFDEGDLIISEAFVDEGPTMKRFQPRAQGRAFQIKKRTSHITVVVATPEKEEAR.

It belongs to the universal ribosomal protein uL22 family. As to quaternary structure, part of the 50S ribosomal subunit.

Functionally, this protein binds specifically to 23S rRNA; its binding is stimulated by other ribosomal proteins, e.g. L4, L17, and L20. It is important during the early stages of 50S assembly. It makes multiple contacts with different domains of the 23S rRNA in the assembled 50S subunit and ribosome. Its function is as follows. The globular domain of the protein is located near the polypeptide exit tunnel on the outside of the subunit, while an extended beta-hairpin is found that lines the wall of the exit tunnel in the center of the 70S ribosome. This chain is Large ribosomal subunit protein uL22, found in Pseudarthrobacter chlorophenolicus (strain ATCC 700700 / DSM 12829 / CIP 107037 / JCM 12360 / KCTC 9906 / NCIMB 13794 / A6) (Arthrobacter chlorophenolicus).